Reading from the N-terminus, the 426-residue chain is DNA polymerase processivity factor component OPG148 (426 aa).

The protein belongs to the orthopoxvirus OPG148 family. In terms of assembly, interacts with the DNA polymerase catalytic subunit OPG071. Interacts with UDG/OPG116. Component of the uracil-DNA glycosylase(UDG)-OPG148-polymerase complex; OPG148 and UDG form a heterodimeric processivity factor that associates with OPG071 to form the processive polymerase holoenzyme. Interacts with OPG117.

Functionally, plays an essential role in viral DNA replication by acting as the polymerase processivity factor together with protein OPG116. Serves as a bridge which links the DNA polymerase OPG071 and the uracil DNA glycosylase. The chain is DNA polymerase processivity factor component OPG148 (OPG148) from Cynomys gunnisoni (Gunnison's prairie dog).